A 301-amino-acid chain; its full sequence is MSKYQTHLKQLEAESIQIMREVAAEFDNPVMLYSVGKDSSVLLHLARKAFYPGKIPFPLMHVDTNWKFKEMIDFRDKMAKKHGFDLIVHKNPRGMEMGVGPFTHGSAKHTDIMKTEGLKQALDMHGFDAAFGGARRDEEKSRAKERVYSFRDSKHRWDPKNQRPELWNIYNGKVDKGESIRVFPLSNWTELDIWQYIYLEGIEIPSLYLAAERPVVERDGTLIMVDDERMPIEEGEKVENKMVRFRTLGCYPLTGAVESQAQTLPEIIQEMLLCTTSERQGRVIDNDSAGSMEKKKMEGYF.

Belongs to the PAPS reductase family. CysD subfamily. As to quaternary structure, heterodimer composed of CysD, the smaller subunit, and CysN.

The enzyme catalyses sulfate + ATP + H(+) = adenosine 5'-phosphosulfate + diphosphate. The protein operates within sulfur metabolism; hydrogen sulfide biosynthesis; sulfite from sulfate: step 1/3. In terms of biological role, with CysN forms the ATP sulfurylase (ATPS) that catalyzes the adenylation of sulfate producing adenosine 5'-phosphosulfate (APS) and diphosphate, the first enzymatic step in sulfur assimilation pathway. APS synthesis involves the formation of a high-energy phosphoric-sulfuric acid anhydride bond driven by GTP hydrolysis by CysN coupled to ATP hydrolysis by CysD. This Shewanella sediminis (strain HAW-EB3) protein is Sulfate adenylyltransferase subunit 2 2.